A 195-amino-acid chain; its full sequence is Cytochrome c oxidase assembly protein CtaG (195 aa).

The Cytoplasmic portion of the chain corresponds to 1 to 9 (MALNGPQKT). The helical; Signal-anchor for type II membrane protein transmembrane segment at 10-30 (VVQLVGVVVLMGGLAWASVPF) threads the bilayer. The Periplasmic segment spans residues 31–195 (YDWFCRVTGF…DTSGAETELN (165 aa)).

Belongs to the COX11/CtaG family.

The protein resides in the cell inner membrane. In terms of biological role, exerts its effect at some terminal stage of cytochrome c oxidase synthesis, probably by being involved in the insertion of the copper B into subunit I. The chain is Cytochrome c oxidase assembly protein CtaG from Ruegeria sp. (strain TM1040) (Silicibacter sp.).